The chain runs to 360 residues: Alanine racemase (360 aa).

Lys36 functions as the Proton acceptor; specific for D-alanine in the catalytic mechanism. Lys36 bears the N6-(pyridoxal phosphate)lysine mark. Arg132 contacts substrate. Residue Tyr256 is the Proton acceptor; specific for L-alanine of the active site. Met304 is a substrate binding site.

It belongs to the alanine racemase family. It depends on pyridoxal 5'-phosphate as a cofactor.

The enzyme catalyses L-alanine = D-alanine. The protein operates within amino-acid biosynthesis; D-alanine biosynthesis; D-alanine from L-alanine: step 1/1. Its function is as follows. Catalyzes the interconversion of L-alanine and D-alanine. May also act on other amino acids. In Haemophilus influenzae (strain ATCC 51907 / DSM 11121 / KW20 / Rd), this protein is Alanine racemase (alr).